A 109-amino-acid chain; its full sequence is T-cell surface glycoprotein CD1b (109 aa).

Positions 1-18 (MLLLPLLLLAGRFPGGDN) are cleaved as a signal peptide. N-linked (GlcNAc...) asparagine glycosylation is found at Asn-38 and Asn-75.

In terms of assembly, heterodimer with B2M (beta-2-microglobulin). Interacts with saposin C. Expressed on cortical thymocytes, on certain T-cell leukemias, and in various other tissues.

The protein resides in the cell membrane. The protein localises to the endosome membrane. Its subcellular location is the lysosome membrane. Functionally, antigen-presenting protein that binds self and non-self lipid and glycolipid antigens and presents them to T-cell receptors on natural killer T-cells. The polypeptide is T-cell surface glycoprotein CD1b (CD1B) (Oryctolagus cuniculus (Rabbit)).